Here is a 326-residue protein sequence, read N- to C-terminus: Vitamin B12 import system permease protein BtuC (326 aa).

9 helical membrane-spanning segments follow: residues 19 to 39 (LSVL…LWIL), 61 to 81 (LAVL…QALF), 88 to 108 (PGLL…VLLG), 112 to 132 (LPNW…TLIL), 146 to 166 (LLAG…AIYF), 184 to 204 (GGVD…LLWI), 240 to 260 (GWMV…GLVI), 274 to 294 (VLLP…DIVA), and 302 to 322 (ELPI…WLLL).

The protein belongs to the binding-protein-dependent transport system permease family. FecCD subfamily. In terms of assembly, the complex is composed of two ATP-binding proteins (BtuD), two transmembrane proteins (BtuC) and a solute-binding protein (BtuF).

The protein resides in the cell inner membrane. In terms of biological role, part of the ABC transporter complex BtuCDF involved in vitamin B12 import. Involved in the translocation of the substrate across the membrane. The sequence is that of Vitamin B12 import system permease protein BtuC from Escherichia coli O6:K15:H31 (strain 536 / UPEC).